The sequence spans 184 residues: Photosystem I assembly protein Ycf4 (184 aa).

The next 2 helical transmembrane spans lie at Phe22–Ser42 and Ile57–Ser77.

This sequence belongs to the Ycf4 family.

Its subcellular location is the plastid. It is found in the chloroplast thylakoid membrane. Functionally, seems to be required for the assembly of the photosystem I complex. This is Photosystem I assembly protein Ycf4 from Aethionema cordifolium (Lebanon stonecress).